The following is a 544-amino-acid chain: Probable protein kinase UbiB (544 aa).

The region spanning 123–505 (EFDEQALASA…GRQKSHNVRS (383 aa)) is the Protein kinase domain. ATP-binding positions include 129 to 137 (LASASIAQV) and lysine 156. The active-site Proton acceptor is the aspartate 291. The helical transmembrane segment at 522-540 (LPLWLSCGTLVTVLLVLLL) threads the bilayer.

The protein belongs to the ABC1 family. UbiB subfamily.

Its subcellular location is the cell inner membrane. It functions in the pathway cofactor biosynthesis; ubiquinone biosynthesis [regulation]. Is probably a protein kinase regulator of UbiI activity which is involved in aerobic coenzyme Q (ubiquinone) biosynthesis. In Actinobacillus pleuropneumoniae serotype 7 (strain AP76), this protein is Probable protein kinase UbiB.